A 295-amino-acid polypeptide reads, in one-letter code: Pyridoxal 5'-phosphate synthase subunit PdxS (295 aa).

Asp-25 contacts D-ribose 5-phosphate. The Schiff-base intermediate with D-ribose 5-phosphate role is filled by Lys-82. Gly-154 serves as a coordination point for D-ribose 5-phosphate. Arg-166 is a binding site for D-glyceraldehyde 3-phosphate. Residues Gly-215 and 236-237 contribute to the D-ribose 5-phosphate site; that span reads GS.

Belongs to the PdxS/SNZ family. In the presence of PdxT, forms a dodecamer of heterodimers.

The catalysed reaction is aldehydo-D-ribose 5-phosphate + D-glyceraldehyde 3-phosphate + L-glutamine = pyridoxal 5'-phosphate + L-glutamate + phosphate + 3 H2O + H(+). The protein operates within cofactor biosynthesis; pyridoxal 5'-phosphate biosynthesis. Functionally, catalyzes the formation of pyridoxal 5'-phosphate from ribose 5-phosphate (RBP), glyceraldehyde 3-phosphate (G3P) and ammonia. The ammonia is provided by the PdxT subunit. Can also use ribulose 5-phosphate and dihydroxyacetone phosphate as substrates, resulting from enzyme-catalyzed isomerization of RBP and G3P, respectively. This chain is Pyridoxal 5'-phosphate synthase subunit PdxS, found in Pasteurella multocida (strain Pm70).